The sequence spans 341 residues: Fructose-1,6-bisphosphatase, cytosolic (341 aa).

Residues Glu-71, Glu-100, Asp-121, Leu-123, and Asp-124 each coordinate Mg(2+). Residues 124-127, Asn-215, Tyr-247, Tyr-267, and Lys-277 each bind substrate; that span reads DGCS. Residue Glu-283 coordinates Mg(2+).

It belongs to the FBPase class 1 family. Requires Mg(2+) as cofactor.

It localises to the cytoplasm. It carries out the reaction beta-D-fructose 1,6-bisphosphate + H2O = beta-D-fructose 6-phosphate + phosphate. This chain is Fructose-1,6-bisphosphatase, cytosolic, found in Beta vulgaris (Sugar beet).